The following is a 365-amino-acid chain: Prostaglandin E2 receptor EP3 subtype (365 aa).

The Extracellular portion of the chain corresponds to 1 to 30 (MAGVWAPEHSVEAHSNQSSAADGCGSVSVA). Asparagine 16 carries an N-linked (GlcNAc...) asparagine glycan. The helical transmembrane segment at 31-55 (FPITMMVTGFVGNALAMLLVVRSYR) threads the bilayer. The Cytoplasmic segment spans residues 56–68 (RRESKRKKSFLLC). Residues 69 to 89 (IGWLALTDLVGQLLTSPVVIL) form a helical membrane-spanning segment. At 90-108 (VYLSQRRWEQLDPSGRLCT) the chain is on the extracellular side. Cysteine 107 and cysteine 184 are oxidised to a cystine. The chain crosses the membrane as a helical span at residues 109–130 (FFGLTMTVFGLSSLLVASAMAV). The Cytoplasmic segment spans residues 131 to 151 (ERALAIRAPHWYASHMKTRAT). A helical membrane pass occupies residues 152-173 (PVLLGVWLSVLAFALLPVLGVG). At 174-203 (RYSVQWPGTWCFISTGPAGNETDSAREPGS) the chain is on the extracellular side. The N-linked (GlcNAc...) asparagine glycan is linked to asparagine 193. A helical transmembrane segment spans residues 204 to 229 (VAFASAFACLGLLALVVTFACNLATI). Over 230-259 (KALVSRCRAKAAASQSSAQWGRITTETAIQ) the chain is Cytoplasmic. Residues 260–283 (LMGIMCVLSVCWSPLLIMMLKMIF) form a helical membrane-spanning segment. Residues 284-303 (NQMSVEQCKTQMGKEKECNS) are Extracellular-facing. The helical transmembrane segment at 304 to 325 (FLIAVRLASLNQILDPWVYLLL) threads the bilayer. The Cytoplasmic segment spans residues 326-365 (RKILLRKFCQIRDHTNYASSSTSLPCPGSSVLMWSDQLER).

It belongs to the G-protein coupled receptor 1 family. In terms of assembly, interacts (via C-terminus) with MKLN1. As to quaternary structure, does not interact with MKLN1. Principally expressed in the tubules of the renal medulla. Specific expression is seen in medullary and cortical thick ascending limbs; lower levels are detected in cortical and inner medullary collecting ducts. Not detected significantly in the glomeruli. In the brain, expressed in all types of glial cells.

It is found in the cell membrane. Receptor for prostaglandin E2 (PGE2). Required for normal development of fever in response to pyrinogens, including IL1B, prostaglandin E2 and bacterial lipopolysaccharide (LPS). Required for normal potentiation of platelet aggregation by prostaglandin E2, and thus plays a role in the regulation of blood coagulation. Required for increased HCO3(-) secretion in the duodenum in response to mucosal acidification, and thereby contributes to the protection of the mucosa against acid-induced ulceration. Not required for normal kidney function, normal urine volume and osmolality. Functionally, receptor for prostaglandin E2 (PGE2); ligand binding activates a signaling cascade via G(i) proteins that leads to the inhibition of adenylate cyclase. In terms of biological role, receptor for prostaglandin E2 (PGE2); ligand binding can activate several distinct signaling cascades, resulting in activation or inhibition of adenylate cyclase. In Rattus norvegicus (Rat), this protein is Prostaglandin E2 receptor EP3 subtype (Ptger3).